Consider the following 92-residue polypeptide: DNA-binding protein HU (92 aa).

The tract at residues 58 to 92 (AGTARNPRTGETVNRPASKTARFQVGEGLKSSLNS) is disordered.

Belongs to the bacterial histone-like protein family. In terms of assembly, homodimer.

Functionally, histone-like DNA-binding protein which is capable of wrapping DNA to stabilize it, and thus to prevent its denaturation under extreme environmental conditions. This Caulobacter vibrioides (strain ATCC 19089 / CIP 103742 / CB 15) (Caulobacter crescentus) protein is DNA-binding protein HU (hup).